A 110-amino-acid polypeptide reads, in one-letter code: Nucleoid-associated protein KPN78578_04440 (110 aa).

The protein belongs to the YbaB/EbfC family. Homodimer.

It localises to the cytoplasm. The protein localises to the nucleoid. Functionally, binds to DNA and alters its conformation. May be involved in regulation of gene expression, nucleoid organization and DNA protection. This is Nucleoid-associated protein KPN78578_04440 from Klebsiella pneumoniae subsp. pneumoniae (strain ATCC 700721 / MGH 78578).